Consider the following 421-residue polypeptide: Elongation factor 1-alpha (421 aa).

One can recognise a tr-type G domain in the interval 4–220 (NRHQNLAVIG…NGLPVPQPPT (217 aa)). The interval 13–20 (GHVDHGKS) is G1. 13–20 (GHVDHGKS) serves as a coordination point for GTP. Ser20 contributes to the Mg(2+) binding site. A G2 region spans residues 69-73 (GVTID). The segment at 90-93 (DCPG) is G3. GTP is bound by residues 90–94 (DCPGH) and 145–148 (NKMD). The interval 145-148 (NKMD) is G4. The tract at residues 184-186 (SAF) is G5.

Belongs to the TRAFAC class translation factor GTPase superfamily. Classic translation factor GTPase family. EF-Tu/EF-1A subfamily.

The protein localises to the cytoplasm. The enzyme catalyses GTP + H2O = GDP + phosphate + H(+). GTP hydrolase that promotes the GTP-dependent binding of aminoacyl-tRNA to the A-site of ribosomes during protein biosynthesis. This is Elongation factor 1-alpha from Halobacterium salinarum (strain ATCC 700922 / JCM 11081 / NRC-1) (Halobacterium halobium).